Here is a 218-residue protein sequence, read N- to C-terminus: ER lumen protein-retaining receptor (218 aa).

The Lumenal portion of the chain corresponds to 1-2; the sequence is MN. A helical transmembrane segment spans residues 3 to 23; that stretch reads LFSFLGDMLHLGSMLILLFKI. The Cytoplasmic portion of the chain corresponds to 24–57; sequence KNDKSCAGVSLKSQILFTIVFTARYLDLFTNYVS. A helical transmembrane segment spans residues 58 to 78; that stretch reads LYITFMKITYIAVSYYTLHLI. The Lumenal segment spans residues 79–94; that stretch reads ARKYKFTYDKDHDTFK. Residues 95–115 traverse the membrane as a helical segment; that stretch reads IVYLIASCAILSLITYDKTTI. The Cytoplasmic segment spans residues 116–123; the sequence is GIYSTFLE. Residues 124 to 144 form a helical membrane-spanning segment; sequence ILWTFSIYLESIAILPQLILL. Topologically, residues 145 to 152 are lumenal; sequence QRTGEVEA. The chain crosses the membrane as a helical span at residues 153–173; sequence LTSNYIVLLGGYRAFYLFNWI. Topologically, residues 174–184 are cytoplasmic; it reads YRITFYNWSGK. Residues 185 to 205 traverse the membrane as a helical segment; it reads IEMLSGLLQTILYADFFYYYA. The Lumenal segment spans residues 206 to 218; that stretch reads KSRMYGKKLVLPQ.

Belongs to the ERD2 family.

The protein localises to the endoplasmic reticulum membrane. Its function is as follows. Required for the retention of luminal endoplasmic reticulum proteins. Determines the specificity of the luminal ER protein retention system. Also required for normal vesicular traffic through the Golgi. This chain is ER lumen protein-retaining receptor (kdelr), found in Dictyostelium discoideum (Social amoeba).